A 139-amino-acid chain; its full sequence is Non-structural protein 1 (139 aa).

The DLNP; interaction with MAP1B motif lies at 136 to 139 (DLNP).

It belongs to the pneumovirus non-structural protein 1 family. As to quaternary structure, monomer. Homomultimer. Heteromultimer with NS2. Interacts with the matrix protein M. Interacts with host ELOC and CUL2; this interaction allows NS1 to form an active E3 ligase with ELOC and CUL2. Interacts with host IRF3; this interaction leads to the disrupted association of IRF3 with CREBBP and thus reduced binding of IRF3 to the IFN-beta promoter. Interacts with host MAVS; this interaction prevents MAVS binding to RIGI and inhibits signaling pathway leading to interferon production. Interacts with host MAP1B/microtubule-associated protein 1B. Interacts with host TRIM25 (via SPRY domain); this interaction suppresses RIGI ubiquitination and results in decreased interaction between RIGI and MAVS.

Its subcellular location is the host cytoplasm. The protein localises to the host mitochondrion. It is found in the host nucleus. Functionally, plays a major role in antagonizing the type I IFN-mediated antiviral response by degrading or inhibiting multiple cellular factors required for either IFN induction or response pathways. Acts cooperatively with NS2 to repress activation and nuclear translocation of host IFN-regulatory factor IRF3. Also disrupts the association of IRF3 with CREBBP. Interacts with host mitochondrial-associated membrane (MAM) MAVS and prevents the interaction with RIGI. Interacts with TRIM25 to suppress TRIM25-mediated RIGI ubiquitination and thereby RIGI-MAVS interaction. Together with NS2, participates in the proteasomal degradation of host STAT2, IRF3, IRF7, TBK1 and RIGI through a NS-degradasome involving CUL2 and Elongin-C. The degradasome requires an intact mitochondrial MAVS. Decreases the levels of host TRAF3 and IKBKE/IKK-epsilon. As functions other than disruptions of the type I IFN-mediated antiviral signaling pathways, induces host SOCS1 and SOCS3 expression. Suppresses premature apoptosis by an NF-kappa-B-dependent, interferon-independent mechanism and thus facilitates virus growth. Additionally, NS1 may serve some inhibitory role in viral transcription and RNA replication. Suppresses proliferation and activation of host CD103+ CD8+ cytotoxic T-lymphocytes and Th17 helper T-lymphocytes. The sequence is that of Non-structural protein 1 (1C) from Homo sapiens (Human).